The sequence spans 458 residues: Hyaluronidase conohyal-P1 (458 aa).

A signal peptide spans 1–18 (MRVVVVVTGLVVVVVATA). The tract at residues 24–47 (HDVKSASSPLSSSSVYQGSSGDDC) is disordered. Residues 28–43 (SASSPLSSSSVYQGSS) show a composition bias toward low complexity. A disulfide bridge links Cys-68 with Cys-342. N-linked (GlcNAc...) asparagine glycans are attached at residues Asn-106 and Asn-141. Glu-151 serves as the catalytic Proton donor. Asn-261, Asn-337, and Asn-359 each carry an N-linked (GlcNAc...) asparagine glycan. The EGF-like domain maps to 363-434 (VMADCSTTLC…VRPSRCHKQQ (72 aa)). 3 disulfide bridges follow: Cys-367–Cys-378, Cys-372–Cys-411, and Cys-413–Cys-422.

This sequence belongs to the glycosyl hydrolase 56 family. In terms of tissue distribution, expressed by the venom duct.

The protein resides in the secreted. It catalyses the reaction Random hydrolysis of (1-&gt;4)-linkages between N-acetyl-beta-D-glucosamine and D-glucuronate residues in hyaluronate.. Functionally, hyaluronidase catalyzes the hydrolysis of hyaluronic acid (HA), an anionic, nonsulfated glycosaminoglycan distributed widely throughout connective, epithelial, and neural tissues. In venom, they are known to enhance diffusion of the venom by degrading the extracellular matrix. This Conus purpurascens (Purple cone) protein is Hyaluronidase conohyal-P1.